A 161-amino-acid chain; its full sequence is Chaperone protein dnaJ 11, chloroplastic (161 aa).

The segment covering 1–18 (MLSSSPTSFTHPFLSSSP) has biased composition (low complexity). A disordered region spans residues 1-31 (MLSSSPTSFTHPFLSSSPPLSPISPPSRTAR). The N-terminal 36 residues, 1 to 36 (MLSSSPTSFTHPFLSSSPPLSPISPPSRTARISPPL), are a transit peptide targeting the chloroplast. Residues 65–133 (SLYDVLEVPL…EKRSVYDRRM (69 aa)) enclose the J domain.

Belongs to the DnaJ family. C/III subfamily. As to expression, expressed in roots, stems, leaves, flowers and developing siliques.

The protein resides in the plastid. Its subcellular location is the chloroplast stroma. Plays a continuous role in plant development probably in the structural organization of compartments. The protein is Chaperone protein dnaJ 11, chloroplastic (ATJ11) of Arabidopsis thaliana (Mouse-ear cress).